Here is a 103-residue protein sequence, read N- to C-terminus: Cystatin-A (103 aa).

Met-1 bears the N-acetylmethionine mark. The short motif at 52 to 56 (QVVAG) is the Secondary area of contact element.

Belongs to the cystatin family.

The protein localises to the cytoplasm. Its function is as follows. This is an intracellular thiol proteinase inhibitor. The sequence is that of Cystatin-A (Csta) from Rattus norvegicus (Rat).